A 933-amino-acid chain; its full sequence is Envelope glycoprotein B (933 aa).

The N-terminal stretch at 1 to 36 is a signal peptide; that stretch reads MPRPRPRALRGSSPGWALVAAVAVGAALLMATLAVA. A compositionally biased stretch (low complexity) spans 36-49; that stretch reads AAPPGPRGPAARSP. Positions 36–115 are disordered; it reads AAPPGPRGPA…GNGTRSAARR (80 aa). Over 37–797 the chain is Virion surface; that stretch reads APPGPRGPAA…SGVSSFLSNP (761 aa). Residues 54–69 show a composition bias toward acidic residues; that stretch reads ASVEPVEDGDYDEYDD. N107 and N161 each carry an N-linked (GlcNAc...) asparagine; by host glycan. Cystine bridges form between C136–C596, C153–C552, C227–C291, C384–C432, and C619–C656. 2 involved in fusion and/or binding to host membrane regions span residues 193–199 and 278–285; these read TWQGSRY and AHAGFYKT. 2 N-linked (GlcNAc...) asparagine; by host glycosylation sites follow: N418 and N450. N-linked (GlcNAc...) asparagine; by host glycosylation is found at N697 and N747. 2 hydrophobic membrane proximal region regions span residues 742-795 and 754-795; these read IDRI…SFLS and LMAG…SFLS. The chain crosses the membrane as a helical span at residues 798–818; that stretch reads FGALAVGLLVLAGLVAAFFAM. At 819 to 933 the chain is on the intravirion side; it reads RYIMRLRANP…SKDDEDGADP (115 aa). Positions 881–884 match the Golgi targeting motif; it reads YMTL. The Internalization motif signature appears at 920-923; sequence YQPL.

Belongs to the herpesviridae glycoprotein B family. As to quaternary structure, homotrimer; disulfide-linked. Binds to heparan sulfate proteoglycans. Interacts with gH/gL heterodimer.

Its subcellular location is the virion membrane. The protein localises to the host cell membrane. It localises to the host endosome membrane. The protein resides in the host Golgi apparatus membrane. Functionally, envelope glycoprotein that forms spikes at the surface of virion envelope. Essential for the initial attachment to heparan sulfate moieties of the host cell surface proteoglycans. Involved in fusion of viral and cellular membranes leading to virus entry into the host cell. Following initial binding to its host receptors, membrane fusion is mediated by the fusion machinery composed at least of gB and the heterodimer gH/gL. May be involved in the fusion between the virion envelope and the outer nuclear membrane during virion egress. This is Envelope glycoprotein B from Herpesvirus ateles type 1 (strain Lennette).